Reading from the N-terminus, the 781-residue chain is MTSQHSAKKSSKNTPKNNRTFKGFLLKFSFTALVLTIFYGGYLDWQIRSKMDGQIWHLPAEVYSRLESVKIADNLAFDEVIQILLDNEYRQTTMVAAPGDFKLEDDSIVVLRRAFPFPDKAEPQRVLRLRFSHNKLSRIEDLVTVKTVDEFRLAPKLIAMLQSDNEDRLAIPLQNYPRLLIDTLILTEDRRFYEHNGINPVGILRALIANIRAGQTVQGGSTLTQQLVKNLFLSRERTITRKANEALMSLVLDWRYDKNRILETYLNEIYLGQNGDTQIHGFELASQFYFGRSIREISLDQIALLVGMVKGPSLYNPWRNPQNALERRNIVLRLMLEHKMIGDELYQLLSQRPLGVQKKGQISRKYPAFIQTLQADLRRKLGEHKISSLLGARIFSTMDLKQQAQAENAVGNTVSQLQLKMKNPHLEGAMIITDYRTGEIRAVVGGLQTQYAGFNRALMAKRQIGSLVKPSIYLTALSNPEQFRLNTPINNQPITINVKGSPPWQPRNYDKKYSDSVMLMDALARSLNIPTVNIGMKVGLSKVIDTQKAMGWDNVEIPKVPAMLLGSYTISPYDVTKLYQTLANQGGRIALTTVDSIADRQGNLIFQHDKSAKQVVPQEAAFQTLFAMQQTVERGTARSLQKDYADLHLAGKTGTTNESRDTWFVGIDGKNISTVWLGRDDNGETKLTGASGALQIYKDYLNRTNIEKLAITPPTTVKWVGINQYGDWDCESYRTIPIWLNNGQNFCGETSSPSLTPTTETETPPQESLWDVLDNPNPPAQ.

The transglycosylase stretch occupies residues 151–322; it reads FRLAPKLIAM…SLYNPWRNPQ (172 aa). The active-site Proton donor; for transglycosylase activity is the E188. Residues 415–702 form a transpeptidase region; the sequence is SQLQLKMKNP…ALQIYKDYLN (288 aa). S466 acts as the Acyl-ester intermediate; for transpeptidase activity in catalysis. Low complexity predominate over residues 749-768; it reads ETSSPSLTPTTETETPPQES. The disordered stretch occupies residues 749 to 781; sequence ETSSPSLTPTTETETPPQESLWDVLDNPNPPAQ.

This sequence in the N-terminal section; belongs to the glycosyltransferase 51 family. It in the C-terminal section; belongs to the transpeptidase family.

The protein resides in the cell inner membrane. It carries out the reaction [GlcNAc-(1-&gt;4)-Mur2Ac(oyl-L-Ala-gamma-D-Glu-L-Lys-D-Ala-D-Ala)](n)-di-trans,octa-cis-undecaprenyl diphosphate + beta-D-GlcNAc-(1-&gt;4)-Mur2Ac(oyl-L-Ala-gamma-D-Glu-L-Lys-D-Ala-D-Ala)-di-trans,octa-cis-undecaprenyl diphosphate = [GlcNAc-(1-&gt;4)-Mur2Ac(oyl-L-Ala-gamma-D-Glu-L-Lys-D-Ala-D-Ala)](n+1)-di-trans,octa-cis-undecaprenyl diphosphate + di-trans,octa-cis-undecaprenyl diphosphate + H(+). The catalysed reaction is Preferential cleavage: (Ac)2-L-Lys-D-Ala-|-D-Ala. Also transpeptidation of peptidyl-alanyl moieties that are N-acyl substituents of D-alanine.. It participates in cell wall biogenesis; peptidoglycan biosynthesis. Cell wall formation. Synthesis of cross-linked peptidoglycan from the lipid intermediates. The enzyme has a penicillin-insensitive transglycosylase N-terminal domain (formation of linear glycan strands) and a penicillin-sensitive transpeptidase C-terminal domain (cross-linking of the peptide subunits). This Haemophilus influenzae (strain ATCC 51907 / DSM 11121 / KW20 / Rd) protein is Penicillin-binding protein 1B (mrcB).